The sequence spans 382 residues: Lipid-A-disaccharide synthase (382 aa).

It belongs to the LpxB family.

It catalyses the reaction 2-N,3-O-bis[(3R)-3-hydroxytetradecanoyl]-alpha-D-glucosaminyl 1-phosphate + UDP-2-N,3-O-bis[(3R)-3-hydroxytetradecanoyl]-alpha-D-glucosamine = lipid A disaccharide (E. coli) + UDP + H(+). It carries out the reaction a lipid X + a UDP-2-N,3-O-bis[(3R)-3-hydroxyacyl]-alpha-D-glucosamine = a lipid A disaccharide + UDP + H(+). The protein operates within glycolipid biosynthesis; lipid IV(A) biosynthesis; lipid IV(A) from (3R)-3-hydroxytetradecanoyl-[acyl-carrier-protein] and UDP-N-acetyl-alpha-D-glucosamine: step 5/6. Condensation of UDP-2,3-diacylglucosamine and 2,3-diacylglucosamine-1-phosphate to form lipid A disaccharide, a precursor of lipid A, a phosphorylated glycolipid that anchors the lipopolysaccharide to the outer membrane of the cell. The protein is Lipid-A-disaccharide synthase of Serratia proteamaculans (strain 568).